We begin with the raw amino-acid sequence, 296 residues long: 33 kDa chaperonin (296 aa).

Cystine bridges form between C233–C235 and C267–C270.

The protein belongs to the HSP33 family. Under oxidizing conditions two disulfide bonds are formed involving the reactive cysteines. Under reducing conditions zinc is bound to the reactive cysteines and the protein is inactive.

It localises to the cytoplasm. Redox regulated molecular chaperone. Protects both thermally unfolding and oxidatively damaged proteins from irreversible aggregation. Plays an important role in the bacterial defense system toward oxidative stress. The polypeptide is 33 kDa chaperonin (Actinobacillus pleuropneumoniae serotype 5b (strain L20)).